Reading from the N-terminus, the 381-residue chain is MSLEPFQKSSALSLGVELEMQLVNTHDYDLAPYAEDMLRLMSKIALPGAVVPEMTSSMIEVSTGICHSSAEVLGQLTQIRDALVKSADKLNIAVVGGGTHPFQQWHERRIYDKPRFRELSELYGYLSKQFTIFGQHVHIGCPDADTALLTLHRMSRYIPHFIALSASSPYVQGQDTAFDSARLNSVFAFPLSGRAPFALTWDEFTVYFNKMAHTGVVKSMKDFYWDIRPKPEFGTIEIRVFDTPLTIERATALAGYVQSLGSWFMNDQPFMPTEDDYLVYTYNRFQACRFGLDAVYVDPATGGHMPLREHILMTMAQIERHAHRLDASASIHLLRTSVERNDNDARWLRERQGEERLLAEVIRQAADRFRGGVDHEPGGFS.

It belongs to the glutamate--cysteine ligase type 2 family. YbdK subfamily.

The catalysed reaction is L-cysteine + L-glutamate + ATP = gamma-L-glutamyl-L-cysteine + ADP + phosphate + H(+). Functionally, ATP-dependent carboxylate-amine ligase which exhibits weak glutamate--cysteine ligase activity. The sequence is that of Putative glutamate--cysteine ligase 2 from Polaromonas naphthalenivorans (strain CJ2).